The primary structure comprises 715 residues: DNA ligase (715 aa).

NAD(+)-binding positions include 47–51, 96–97, and glutamate 128; these read DADYD and SL. Lysine 130 functions as the N6-AMP-lysine intermediate in the catalytic mechanism. NAD(+)-binding residues include arginine 151, glutamate 188, lysine 306, and lysine 330. Residues cysteine 435, cysteine 438, cysteine 453, and cysteine 459 each coordinate Zn(2+). Residues 637–715 form the BRCT domain; sequence RRDTAVAGKT…EDEWLALIGN (79 aa).

This sequence belongs to the NAD-dependent DNA ligase family. LigA subfamily. Mg(2+) is required as a cofactor. The cofactor is Mn(2+).

It carries out the reaction NAD(+) + (deoxyribonucleotide)n-3'-hydroxyl + 5'-phospho-(deoxyribonucleotide)m = (deoxyribonucleotide)n+m + AMP + beta-nicotinamide D-nucleotide.. Its function is as follows. DNA ligase that catalyzes the formation of phosphodiester linkages between 5'-phosphoryl and 3'-hydroxyl groups in double-stranded DNA using NAD as a coenzyme and as the energy source for the reaction. It is essential for DNA replication and repair of damaged DNA. The polypeptide is DNA ligase (Rhodopseudomonas palustris (strain TIE-1)).